A 190-amino-acid polypeptide reads, in one-letter code: DNA dC-&gt;dU-editing enzyme APOBEC-3C (190 aa).

The 110-residue stretch at Asp-29 to Leu-138 folds into the CMP/dCMP-type deaminase domain. Residues His-66, Cys-97, and Cys-100 each contribute to the Zn(2+) site.

This sequence belongs to the cytidine and deoxycytidylate deaminase family. As to quaternary structure, homodimer. Interacts with TRIB3. Zn(2+) serves as cofactor.

Its subcellular location is the nucleus. The protein localises to the cytoplasm. It catalyses the reaction a 2'-deoxycytidine in single-stranded DNA + H2O + H(+) = a 2'-deoxyuridine in single-stranded DNA + NH4(+). Its function is as follows. DNA deaminase (cytidine deaminase) which acts as an inhibitor of retrovirus replication and retrotransposon mobility via deaminase-dependent and -independent mechanisms. May also play a role in the epigenetic regulation of gene expression through the process of active DNA demethylation. The polypeptide is DNA dC-&gt;dU-editing enzyme APOBEC-3C (APOBEC3C) (Gorilla gorilla gorilla (Western lowland gorilla)).